A 320-amino-acid chain; its full sequence is Dual oxidase maturation factor 2 (320 aa).

A helical membrane pass occupies residues 22–42; that stretch reads VPLLIVILVFLSLAASFLFIL. Residues 43–51 lie on the Cytoplasmic side of the membrane; the sequence is PGIRGHSRW. The chain crosses the membrane as a helical span at residues 52–72; the sequence is FWLVRVLLSLFIGAEIVAVHF. Residues 73-183 lie on the Extracellular side of the membrane; sequence SGDWFVGRVW…HLAGHYAAAT (111 aa). Asn84, Asn109, and Asn121 each carry an N-linked (GlcNAc...) asparagine glycan. A helical transmembrane segment spans residues 184-204; the sequence is LWVAFCFWIIANALLSMPAPL. Residues 205 to 206 lie on the Cytoplasmic side of the membrane; that stretch reads YG. A helical membrane pass occupies residues 207-227; sequence GLALLTTGAFTLFGVFAFASI. Residues 228–249 are Extracellular-facing; that stretch reads SSVPLCHFRLGSAVLTPYYGAS. Residues 250-270 traverse the membrane as a helical segment; the sequence is FWLTLATGILSLLLGGAVVIL. Topologically, residues 271 to 320 are cytoplasmic; the sequence is HYTRPSALRSFLDLSVKDCSNQAKGNSPLTLNNPQHEQLKSPDLNITTLL.

The protein belongs to the DUOXA family. As to quaternary structure, heterodimer with DUXA2; disulfide-linked. Interacts with CSNK1G2. In terms of processing, N-glycosylated.

It localises to the endoplasmic reticulum membrane. Functionally, required for the maturation and the transport from the endoplasmic reticulum to the plasma membrane of functional DUOX2. May play a role in thyroid hormone synthesis. This chain is Dual oxidase maturation factor 2 (Duoxa2), found in Mus musculus (Mouse).